A 209-amino-acid polypeptide reads, in one-letter code: ATP-dependent Clp protease proteolytic subunit (209 aa).

The active-site Nucleophile is the serine 111. Residue histidine 136 is part of the active site.

The protein belongs to the peptidase S14 family. Fourteen ClpP subunits assemble into 2 heptameric rings which stack back to back to give a disk-like structure with a central cavity, resembling the structure of eukaryotic proteasomes.

The protein resides in the cytoplasm. The enzyme catalyses Hydrolysis of proteins to small peptides in the presence of ATP and magnesium. alpha-casein is the usual test substrate. In the absence of ATP, only oligopeptides shorter than five residues are hydrolyzed (such as succinyl-Leu-Tyr-|-NHMec, and Leu-Tyr-Leu-|-Tyr-Trp, in which cleavage of the -Tyr-|-Leu- and -Tyr-|-Trp bonds also occurs).. Cleaves peptides in various proteins in a process that requires ATP hydrolysis. Has a chymotrypsin-like activity. Plays a major role in the degradation of misfolded proteins. The polypeptide is ATP-dependent Clp protease proteolytic subunit (Dechloromonas aromatica (strain RCB)).